Reading from the N-terminus, the 324-residue chain is Phospho-N-acetylmuramoyl-pentapeptide-transferase (324 aa).

The next 9 helical transmembrane spans lie at 5 to 25, 51 to 71, 77 to 97, 117 to 137, 147 to 167, 176 to 196, 203 to 223, 227 to 248, and 302 to 322; these read VILF…PIFI, TPTM…IVMI, ISPE…LGFL, LIGQ…YQFA, VSFD…VGGS, LDGL…ILAW, VAIF…FNAH, VFMG…AILT, and VVVT…YIEV.

Belongs to the glycosyltransferase 4 family. MraY subfamily. Requires Mg(2+) as cofactor.

It is found in the cell membrane. The catalysed reaction is UDP-N-acetyl-alpha-D-muramoyl-L-alanyl-gamma-D-glutamyl-meso-2,6-diaminopimeloyl-D-alanyl-D-alanine + di-trans,octa-cis-undecaprenyl phosphate = di-trans,octa-cis-undecaprenyl diphospho-N-acetyl-alpha-D-muramoyl-L-alanyl-D-glutamyl-meso-2,6-diaminopimeloyl-D-alanyl-D-alanine + UMP. It functions in the pathway cell wall biogenesis; peptidoglycan biosynthesis. In terms of biological role, catalyzes the initial step of the lipid cycle reactions in the biosynthesis of the cell wall peptidoglycan: transfers peptidoglycan precursor phospho-MurNAc-pentapeptide from UDP-MurNAc-pentapeptide onto the lipid carrier undecaprenyl phosphate, yielding undecaprenyl-pyrophosphoryl-MurNAc-pentapeptide, known as lipid I. The polypeptide is Phospho-N-acetylmuramoyl-pentapeptide-transferase (Bacillus pumilus (strain SAFR-032)).